Here is a 393-residue protein sequence, read N- to C-terminus: MQQTKKLTQCDVTIAVMSGSFLQRGEPALVSKWYRTKMALAGGIDLVVELPYAFATQKAETFANGAISILNALGVSDICFGSEDGHVQHFYNTLSLQQKKQNTFNQLVQQYISEGNSYAKATSEAFSHILSGHDTIDMSQPNNILGLHYIQAILSQKSTIRAHTIKRFAAHYHDESFTNKHIASATSIRKQLFIGDCSFTSIYPFVPNCTSSLLEEYYHIYHVLHNWETYFPLFKYKLLTMSAKELQHIYEMEEGLEHRILAKIQNATSFLTFMEAIKTKRYTWTRLQRVCTHILTNTTKEEIKSAAIENHAPYIRLLGMSQKGQSYLSKNKKQMSLPLLTHTKTFEHPVLNIERRANAVYLSALQEPLRTKCIQQNITQYPIRYNEIDKTFL.

G81, N142, and R167 together coordinate ATP.

It belongs to the TmcAL family.

It localises to the cytoplasm. It catalyses the reaction cytidine(34) in elongator tRNA(Met) + acetate + ATP = N(4)-acetylcytidine(34) in elongator tRNA(Met) + AMP + diphosphate. Its function is as follows. Catalyzes the formation of N(4)-acetylcytidine (ac(4)C) at the wobble position of elongator tRNA(Met), using acetate and ATP as substrates. First activates an acetate ion to form acetyladenylate (Ac-AMP) and then transfers the acetyl group to tRNA to form ac(4)C34. The sequence is that of tRNA(Met) cytidine acetate ligase from Bacillus cytotoxicus (strain DSM 22905 / CIP 110041 / 391-98 / NVH 391-98).